The sequence spans 366 residues: DNA polymerase IV (366 aa).

In terms of domain architecture, UmuC spans 6–197 (IIHVDMDYFY…LKVSKLWGIG (192 aa)). Positions 10 and 114 each coordinate Mg(2+). Glu115 is an active-site residue.

It belongs to the DNA polymerase type-Y family. As to quaternary structure, monomer. It depends on Mg(2+) as a cofactor.

It localises to the cytoplasm. The catalysed reaction is DNA(n) + a 2'-deoxyribonucleoside 5'-triphosphate = DNA(n+1) + diphosphate. Poorly processive, error-prone DNA polymerase involved in untargeted mutagenesis. Copies undamaged DNA at stalled replication forks, which arise in vivo from mismatched or misaligned primer ends. These misaligned primers can be extended by PolIV. Exhibits no 3'-5' exonuclease (proofreading) activity. May be involved in translesional synthesis. This chain is DNA polymerase IV, found in Methanosarcina acetivorans (strain ATCC 35395 / DSM 2834 / JCM 12185 / C2A).